A 443-amino-acid polypeptide reads, in one-letter code: Xaa-Pro dipeptidase (443 aa).

Residues D244, D255, H336, E381, and E420 each contribute to the Mn(2+) site.

This sequence belongs to the peptidase M24B family. Bacterial-type prolidase subfamily. Mn(2+) serves as cofactor.

It catalyses the reaction Xaa-L-Pro dipeptide + H2O = an L-alpha-amino acid + L-proline. Its function is as follows. Splits dipeptides with a prolyl residue in the C-terminal position. This Stenotrophomonas maltophilia (strain R551-3) protein is Xaa-Pro dipeptidase.